The sequence spans 192 residues: Dynein axonemal light chain 1 (192 aa).

LRR repeat units follow at residues 49-70, 71-92, 94-115, and 116-137; these read NCERLSLSTNCIEKIANLNGLK, NLKILSLGRNNIKNLNGLEAVG, TLEELWISYNLIEKLKGIHVMK, and KLKVLYMSNNLVKEWGEFLKLA. An LRRCT domain is found at 150-192; that stretch reads NPLEEKYSADGNWIEEATKRLPKLKKLDGNPVIKQEEETEGES.

Belongs to the dynein light chain LC1-type family. As to quaternary structure, interacts with DNAH5, a outer arm dynein heavy chain. Interacts with tubulin located within the A-tubule of the outer doublets in a ATP-independent manner.

The protein resides in the cytoplasm. Its subcellular location is the cytoskeleton. The protein localises to the cilium axoneme. Part of the multisubunit axonemal ATPase complexes that generate the force for cilia motility and govern beat frequency. Component of the outer arm dynein (ODA). May be involved in a mechanosensory feedback mechanism controlling ODA activity based on external conformational cues by tethering the outer arm dynein heavy chain (DNAH5) to the microtubule within the axoneme. The chain is Dynein axonemal light chain 1 (dnal1) from Danio rerio (Zebrafish).